The primary structure comprises 96 residues: Co-chaperonin GroES 2 (96 aa).

The protein belongs to the GroES chaperonin family. Heptamer of 7 subunits arranged in a ring. Interacts with the chaperonin GroEL.

Its subcellular location is the cytoplasm. Functionally, together with the chaperonin GroEL, plays an essential role in assisting protein folding. The GroEL-GroES system forms a nano-cage that allows encapsulation of the non-native substrate proteins and provides a physical environment optimized to promote and accelerate protein folding. GroES binds to the apical surface of the GroEL ring, thereby capping the opening of the GroEL channel. The protein is Co-chaperonin GroES 2 of Vibrio parahaemolyticus serotype O3:K6 (strain RIMD 2210633).